The primary structure comprises 398 residues: Aspartate aminotransferase (398 aa).

L-aspartate contacts are provided by glycine 36, tryptophan 132, and asparagine 185. Lysine 248 is modified (N6-(pyridoxal phosphate)lysine). Arginine 376 serves as a coordination point for L-aspartate.

It belongs to the class-I pyridoxal-phosphate-dependent aminotransferase family. As to quaternary structure, homodimer. The cofactor is pyridoxal 5'-phosphate.

Its subcellular location is the cytoplasm. It catalyses the reaction L-aspartate + 2-oxoglutarate = oxaloacetate + L-glutamate. This chain is Aspartate aminotransferase (aspC), found in Pseudomonas aeruginosa (strain ATCC 15692 / DSM 22644 / CIP 104116 / JCM 14847 / LMG 12228 / 1C / PRS 101 / PAO1).